We begin with the raw amino-acid sequence, 247 residues long: UPF0273 protein PH0284 (247 aa).

A KaiC domain is found at Arg3–Leu247. Residue Gly30 to Thr37 participates in ATP binding.

It belongs to the UPF0273 family.

The sequence is that of UPF0273 protein PH0284 from Pyrococcus horikoshii (strain ATCC 700860 / DSM 12428 / JCM 9974 / NBRC 100139 / OT-3).